Here is a 200-residue protein sequence, read N- to C-terminus: Gamma-glutamyl-CDP-amidate hydrolase (200 aa).

The Glutamine amidotransferase type-1 domain maps to Glu20–Glu200. The active-site Nucleophile is Cys101. Residues His178 and Glu180 contribute to the active site.

It carries out the reaction N(5)-(cytidine 5'-diphosphoramidyl)-L-glutamine + H2O = cytidine 5'-diphosphoramidate + L-glutamate + H(+). Its pathway is capsule biogenesis; capsule polysaccharide biosynthesis. Its function is as follows. Involved in the biosynthesis of the O-methyl phosphoramidate (MeOPN) group found on the capsular polysaccharide (CPS) of C.jejuni. Catalyzes the hydrolysis of CDP-L-glutamine to L-glutamate and cytidine diphosphoramidate. The polypeptide is Gamma-glutamyl-CDP-amidate hydrolase (Campylobacter jejuni subsp. jejuni serotype O:2 (strain ATCC 700819 / NCTC 11168)).